A 908-amino-acid polypeptide reads, in one-letter code: MAAAAGAEGRRAALEAVAAPERGGGSCVLCCGDLEATALGRCDHPVCYRCSTKMRVLCEQRYCAVCREELRQVVFGKKLPAFALIPIHQLQHEKKYDIYFADGKVFALYRQLLQHECPRCPHLPPFSLFGDLEQHMRKQHELFCCKLCLKHLKIFTYERKWYSRKDLARHRMQGDPDDTSHRGHPLCKFCDERYLDNDELLKHLRRDHYFCHFCDSDGAQDYYSDYAYLREHFREKHFLCEEGRCSTEQFTHAFRTEIDLKAHKTACHSRSRAEARQNRQIDLQFSFAPRHSRRSEGVVSGEDYEEVDRYNRQGRAGRASGRGAQQNRRGSWRYKREEEDREVAAAIRASVAAQQQEETQRVEDREEGSRPKKEEAAARVPEEPRGHRRLPRAQGEGSGSKEASANGPVSQEAFPATGPGPVVALSNTLPPPSPELKEEDFPSLCASTSSCCTAVTPGSVGLALAYPGPPRGKNTFQEEDFPALVSSAPKPSSAPSSLISAWNSGCSKKGNLPTPGSQAVVGGSQPPRKAGKGSRGGRKGGPAPVDEEDSGGLTVQGLRSVPTTVAVSSLLAPATNQSSAKVGKKKKVGSEKPGATSSPLLPPDHTPKPSGAEQVLEAPLSKAEVPVTIVVNGHSEGSALVRSAPKEPPGLPRPLGPLPCPIPQEDFPALGGPCPPRMPPPPGFSTVVLLKGTPPPPPPPPGLVPPISKPPPGFSSLLPSSHSACAPSPTTTTTTTTTTKTPGLAPTPQAYLVPENFRERNLQLIQSIKDFLQSDEACFSKFKSHSGEFRQGMISAAQYYKSCRDLLGESFQKIFSELLALLPDTAKQQELLSAHTDFCSREKPPNSRSKRNKKNVWQTSTQQLGLDCCVCPTCQQVLAHGDVSSHQALHAARDDDFPSLQAIARIIT.

The RING-type zinc finger occupies 27 to 67 (CVLCCGDLEATALGRCDHPVCYRCSTKMRVLCEQRYCAVCR). The C2H2-type zinc-finger motif lies at 185–208 (PLCKFCDERYLDNDELLKHLRRDH). Disordered regions lie at residues 292–338 (SRRS…KREE), 350–441 (SVAA…EEDF), 467–557 (PGPP…TVQG), 569–619 (SLLA…LEAP), and 719–744 (PSSH…TPGL). Phosphoserine is present on S295. Y304 carries the post-translational modification Phosphotyrosine. The span at 313-329 (QGRAGRASGRGAQQNRR) shows a compositional bias: low complexity. Basic and acidic residues predominate over residues 358–385 (ETQRVEDREEGSRPKKEEAAARVPEEPR). The residue at position 433 (S433) is a Phosphoserine. Residues 482-501 (PALVSSAPKPSSAPSSLISA) show a composition bias toward low complexity. Positions 529–538 (KAGKGSRGGR) are enriched in basic residues.

The protein belongs to the ZNF598/HEL2 family. In terms of assembly, interacts with the E2 ubiquitin-conjugating enzyme UBE2D3. Component of the 4EHP-GYF2 complex, at least composed of EIF4E2, GIGYF2 and ZNF598.

It is found in the cytoplasm. The protein resides in the cytosol. The enzyme catalyses S-ubiquitinyl-[E2 ubiquitin-conjugating enzyme]-L-cysteine + [acceptor protein]-L-lysine = [E2 ubiquitin-conjugating enzyme]-L-cysteine + N(6)-ubiquitinyl-[acceptor protein]-L-lysine.. It functions in the pathway protein modification; protein ubiquitination. In terms of biological role, E3 ubiquitin-protein ligase that plays a key role in the ribosome quality control (RQC), a pathway that takes place when a ribosome has stalled during translation, leading to degradation of nascent peptide chains. ZNF598 is activated when ribosomes are stalled within an mRNA following translation of prematurely polyadenylated mRNAs. Acts as a ribosome collision sensor: specifically recognizes and binds collided di-ribosome, which arises when a trailing ribosome encounters a slower leading ribosome, leading to terminally arrest translation. Following binding to colliding ribosomes, mediates monoubiquitination of 40S ribosomal proteins RPS10/eS10 and RPS3/uS3, and 'Lys-63'-linked polyubiquitination of RPS20/uS10. Polyubiquitination of RPS20/uS10 promotes recruitment of the RQT (ribosome quality control trigger) complex, which drives the disassembly of stalled ribosomes, followed by degradation of nascent peptides. E3 ubiquitin-protein ligase activity is dependent on the E2 ubiquitin-conjugating enzyme UBE2D3. Also acts as an adapter that recruits the 4EHP-GYF2 complex to mRNAs. Independently of its role in RQC, may also act as a negative regulator of interferon-stimulated gene (ISG) expression. This chain is E3 ubiquitin-protein ligase ZNF598, found in Mus musculus (Mouse).